The primary structure comprises 504 residues: Maturase K (504 aa).

It belongs to the intron maturase 2 family. MatK subfamily.

It is found in the plastid. The protein resides in the chloroplast. Usually encoded in the trnK tRNA gene intron. Probably assists in splicing its own and other chloroplast group II introns. This chain is Maturase K, found in Arabidopsis halleri.